Consider the following 145-residue polypeptide: Cell wall synthesis protein CwsA (145 aa).

A helical membrane pass occupies residues 104–124 (WIFAGIAAAILAGGAVAFSIV).

The protein belongs to the CwsA family.

Its subcellular location is the cell membrane. Required for regulated cell division, cell wall synthesis and the maintenance of cell shape. This Mycobacterium bovis (strain ATCC BAA-935 / AF2122/97) protein is Cell wall synthesis protein CwsA.